The sequence spans 546 residues: CTP synthase (546 aa).

The segment at 1 to 269 is amidoligase domain; the sequence is MNSNTKIIFV…DAKLVELLNL (269 aa). S16 provides a ligand contact to CTP. A UTP-binding site is contributed by S16. Residues 17 to 22 and D74 each bind ATP; that span reads SLGKGV. Mg(2+) is bound by residues D74 and E143. Residues 150 to 152, 190 to 195, and K226 each bind CTP; these read DIE and KTKPTQ. UTP-binding positions include 190-195 and K226; that span reads KTKPTQ. Residues 294–546 enclose the Glutamine amidotransferase type-1 domain; sequence TIAMVGKYVS…IQAAIENSNN (253 aa). L-glutamine is bound at residue G356. C383 acts as the Nucleophile; for glutamine hydrolysis in catalysis. L-glutamine-binding positions include 384–387, E407, and R474; that span reads LGMQ. Residues H519 and E521 contribute to the active site.

Belongs to the CTP synthase family. As to quaternary structure, homotetramer.

It carries out the reaction UTP + L-glutamine + ATP + H2O = CTP + L-glutamate + ADP + phosphate + 2 H(+). The enzyme catalyses L-glutamine + H2O = L-glutamate + NH4(+). The catalysed reaction is UTP + NH4(+) + ATP = CTP + ADP + phosphate + 2 H(+). It functions in the pathway pyrimidine metabolism; CTP biosynthesis via de novo pathway; CTP from UDP: step 2/2. Its activity is regulated as follows. Allosterically activated by GTP, when glutamine is the substrate; GTP has no effect on the reaction when ammonia is the substrate. The allosteric effector GTP functions by stabilizing the protein conformation that binds the tetrahedral intermediate(s) formed during glutamine hydrolysis. Inhibited by the product CTP, via allosteric rather than competitive inhibition. In terms of biological role, catalyzes the ATP-dependent amination of UTP to CTP with either L-glutamine or ammonia as the source of nitrogen. Regulates intracellular CTP levels through interactions with the four ribonucleotide triphosphates. The polypeptide is CTP synthase (Francisella tularensis subsp. tularensis (strain FSC 198)).